The following is a 1184-amino-acid chain: uncharacterized protein (1184 aa).

2 disordered regions span residues 115-152 (ETSS…AHVS) and 397-426 (TYKP…VPER). Polar residues-rich tracts occupy residues 137-152 (HVMN…AHVS) and 397-421 (TYKP…TSHN). The residue at position 686 (S686) is a Phosphoserine. 4 stretches are compositionally biased toward basic and acidic residues: residues 705 to 767 (LSER…ESAH), 783 to 792 (FEHETEPSHY), 849 to 863 (SHAH…RDLG), and 891 to 902 (YLHDEKTRDTLT). 2 disordered regions span residues 705–870 (LSER…FGDV) and 890–1017 (DYLH…SSPK). The residue at position 905 (S905) is a Phosphoserine. Residues 920-932 (EDHPHASEAERAH) are compositionally biased toward basic and acidic residues. The segment covering 941–950 (SSESSPESQS) has biased composition (low complexity). Positions 999–1011 (PRERLDDNAKEIL) are enriched in basic and acidic residues. S1018 is modified (phosphoserine). Disordered stretches follow at residues 1029–1107 (NRKD…IGTQ) and 1135–1154 (DVDN…KSRP). Positions 1032–1045 (DKAAVKRMLEEDSS) are enriched in basic and acidic residues. Residues 1073 to 1107 (PAVNNSTKPVAVTSKNGHSRNGSHAAHSNNVIGTQ) are compositionally biased toward polar residues. A compositionally biased stretch (low complexity) spans 1138 to 1150 (NVVSGHSNVNGVS).

Its subcellular location is the cytoplasm. This is an uncharacterized protein from Schizosaccharomyces pombe (strain 972 / ATCC 24843) (Fission yeast).